Consider the following 108-residue polypeptide: MELQFDEKGLIPVITQDVKTKEVLMLAYANEEAIKLTLKTGFAHYWSRSRKKLWKKGETSGNVQRVVEIRYDCDCDALLYLVEQKGNACHTGNYSCFYRRLEGDEVRC.

D72 is a binding site for Mg(2+). C73 serves as a coordination point for Zn(2+). Mg(2+) is bound by residues D74 and D76. Zn(2+) is bound by residues C89 and C96.

It belongs to the PRA-CH family. Homodimer. The cofactor is Mg(2+). Zn(2+) serves as cofactor.

The protein resides in the cytoplasm. The catalysed reaction is 1-(5-phospho-beta-D-ribosyl)-5'-AMP + H2O = 1-(5-phospho-beta-D-ribosyl)-5-[(5-phospho-beta-D-ribosylamino)methylideneamino]imidazole-4-carboxamide. The protein operates within amino-acid biosynthesis; L-histidine biosynthesis; L-histidine from 5-phospho-alpha-D-ribose 1-diphosphate: step 3/9. Catalyzes the hydrolysis of the adenine ring of phosphoribosyl-AMP. The protein is Phosphoribosyl-AMP cyclohydrolase of Archaeoglobus fulgidus (strain ATCC 49558 / DSM 4304 / JCM 9628 / NBRC 100126 / VC-16).